The following is a 95-amino-acid chain: Large ribosomal subunit protein uL23 (95 aa).

This sequence belongs to the universal ribosomal protein uL23 family. As to quaternary structure, part of the 50S ribosomal subunit. Contacts protein L29, and trigger factor when it is bound to the ribosome.

One of the early assembly proteins it binds 23S rRNA. One of the proteins that surrounds the polypeptide exit tunnel on the outside of the ribosome. Forms the main docking site for trigger factor binding to the ribosome. The chain is Large ribosomal subunit protein uL23 from Desulfitobacterium hafniense (strain Y51).